We begin with the raw amino-acid sequence, 324 residues long: Pseudouridine-5'-phosphate glycosidase (324 aa).

The active-site Proton donor is Glu43. 2 residues coordinate substrate: Lys104 and Val124. Position 156 (Asp156) interacts with Mn(2+). 158–160 contacts substrate; the sequence is SAD. Lys177 functions as the Nucleophile in the catalytic mechanism.

It belongs to the pseudouridine-5'-phosphate glycosidase family. Homotrimer. It depends on Mn(2+) as a cofactor.

The catalysed reaction is D-ribose 5-phosphate + uracil = psi-UMP + H2O. Its function is as follows. Catalyzes the reversible cleavage of pseudouridine 5'-phosphate (PsiMP) to ribose 5-phosphate and uracil. Functions biologically in the cleavage direction, as part of a pseudouridine degradation pathway. In Salinispora tropica (strain ATCC BAA-916 / DSM 44818 / JCM 13857 / NBRC 105044 / CNB-440), this protein is Pseudouridine-5'-phosphate glycosidase.